Reading from the N-terminus, the 376-residue chain is Arsenite methyltransferase (376 aa).

2 positions are modified to phosphoserine: serine 47 and serine 336. The span at 354–363 shows a compositional bias: basic and acidic residues; the sequence is SDKMKPRHAP. A disordered region spans residues 354–376; the sequence is SDKMKPRHAPEGTGGCCGKRKNC.

It belongs to the methyltransferase superfamily. Arsenite methyltransferase family.

The protein localises to the cytoplasm. It is found in the cytosol. The catalysed reaction is arsenic triglutathione + [thioredoxin]-dithiol + S-adenosyl-L-methionine + 2 H2O = methylarsonous acid + [thioredoxin]-disulfide + 3 glutathione + S-adenosyl-L-homocysteine + H(+). It catalyses the reaction arsenic triglutathione + 2 [thioredoxin]-dithiol + 2 S-adenosyl-L-methionine + H2O = dimethylarsinous acid + 2 [thioredoxin]-disulfide + 3 glutathione + 2 S-adenosyl-L-homocysteine + 2 H(+). The enzyme catalyses arsenic triglutathione + 3 [thioredoxin]-dithiol + 3 S-adenosyl-L-methionine = trimethylarsine + 3 [thioredoxin]-disulfide + 3 glutathione + 3 S-adenosyl-L-homocysteine + 3 H(+). Catalyzes the transfer of a methyl group from AdoMet to trivalent arsenicals producing methylated and dimethylated arsenicals. It methylates arsenite to form methylarsonate, Me-AsO(3)H(2), which is reduced by methylarsonate reductase to methylarsonite, Me-As(OH)2. Methylarsonite is also a substrate and it is converted into the much less toxic compound dimethylarsinate (cacodylate), Me(2)As(O)-OH. The protein is Arsenite methyltransferase (As3mt) of Mus musculus (Mouse).